A 314-amino-acid polypeptide reads, in one-letter code: FHA domain-containing protein DDL (314 aa).

Over residues 1–10 (MAPSSRSPSP) the composition is skewed to low complexity. The interval 1–146 (MAPSSRSPSP…NVEEDSVARM (146 aa)) is disordered. Positions 18 to 127 (ARGEKEIGRS…AIASRHDEGS (110 aa)) are enriched in basic and acidic residues. Phosphoserine is present on Ser-133. The region spanning 219 to 282 (YLFGRERRIA…NKTYINESPI (64 aa)) is the FHA domain.

In terms of assembly, interacts with DCL1 (via N-terminus). In terms of tissue distribution, expressed in roots, lateral roots, vascular strands of roots and leaves, vegetative meristems, pollen and developing seeds.

It is found in the nucleus. Functionally, involved in the microRNA (miRNA) and short interfering RNA (siRNA) biogenesis. May facilitate DCL1 to access or recognize primary miRNAs. Binds RNA non-specifically. The polypeptide is FHA domain-containing protein DDL (DDL) (Arabidopsis thaliana (Mouse-ear cress)).